A 362-amino-acid polypeptide reads, in one-letter code: 3-dehydroquinate synthase (362 aa).

Residues 71–76 (DGEQYK), 105–109 (GVVGD), 129–130 (TT), lysine 142, lysine 151, and 169–172 (CLKT) each bind NAD(+). 3 residues coordinate Zn(2+): glutamate 184, histidine 248, and histidine 265.

It belongs to the sugar phosphate cyclases superfamily. Dehydroquinate synthase family. It depends on Co(2+) as a cofactor. Requires Zn(2+) as cofactor. NAD(+) is required as a cofactor.

It localises to the cytoplasm. It carries out the reaction 7-phospho-2-dehydro-3-deoxy-D-arabino-heptonate = 3-dehydroquinate + phosphate. Its pathway is metabolic intermediate biosynthesis; chorismate biosynthesis; chorismate from D-erythrose 4-phosphate and phosphoenolpyruvate: step 2/7. Catalyzes the conversion of 3-deoxy-D-arabino-heptulosonate 7-phosphate (DAHP) to dehydroquinate (DHQ). In Yersinia pseudotuberculosis serotype O:1b (strain IP 31758), this protein is 3-dehydroquinate synthase.